The primary structure comprises 341 residues: L-threonine 3-dehydrogenase (341 aa).

Cysteine 38 contributes to the Zn(2+) binding site. Catalysis depends on charge relay system residues threonine 40 and histidine 43. Zn(2+)-binding residues include histidine 63, glutamate 64, cysteine 93, cysteine 96, cysteine 99, and cysteine 107. NAD(+) contacts are provided by residues isoleucine 175, aspartate 195, arginine 200, 262–264 (LGI), and 286–287 (IY).

The protein belongs to the zinc-containing alcohol dehydrogenase family. As to quaternary structure, homotetramer. The cofactor is Zn(2+).

The protein localises to the cytoplasm. It carries out the reaction L-threonine + NAD(+) = (2S)-2-amino-3-oxobutanoate + NADH + H(+). Its pathway is amino-acid degradation; L-threonine degradation via oxydo-reductase pathway; glycine from L-threonine: step 1/2. Its function is as follows. Catalyzes the NAD(+)-dependent oxidation of L-threonine to 2-amino-3-ketobutyrate. The protein is L-threonine 3-dehydrogenase of Shewanella baltica (strain OS223).